Consider the following 311-residue polypeptide: Aspartate carbamoyltransferase catalytic subunit (311 aa).

The carbamoyl phosphate site is built by arginine 55 and threonine 56. Residue lysine 85 participates in L-aspartate binding. Residues arginine 106, histidine 135, and glutamine 138 each contribute to the carbamoyl phosphate site. 2 residues coordinate L-aspartate: arginine 168 and arginine 230. Residues leucine 268 and proline 269 each contribute to the carbamoyl phosphate site.

The protein belongs to the aspartate/ornithine carbamoyltransferase superfamily. ATCase family. Heterododecamer (2C3:3R2) of six catalytic PyrB chains organized as two trimers (C3), and six regulatory PyrI chains organized as three dimers (R2).

It catalyses the reaction carbamoyl phosphate + L-aspartate = N-carbamoyl-L-aspartate + phosphate + H(+). It functions in the pathway pyrimidine metabolism; UMP biosynthesis via de novo pathway; (S)-dihydroorotate from bicarbonate: step 2/3. In terms of biological role, catalyzes the condensation of carbamoyl phosphate and aspartate to form carbamoyl aspartate and inorganic phosphate, the committed step in the de novo pyrimidine nucleotide biosynthesis pathway. This is Aspartate carbamoyltransferase catalytic subunit from Pectobacterium carotovorum subsp. carotovorum (strain PC1).